The chain runs to 661 residues: Fructose-1,6-bisphosphatase class 3 (661 aa).

It belongs to the FBPase class 3 family. Mn(2+) serves as cofactor.

It catalyses the reaction beta-D-fructose 1,6-bisphosphate + H2O = beta-D-fructose 6-phosphate + phosphate. The protein operates within carbohydrate biosynthesis; gluconeogenesis. This Clostridioides difficile (strain 630) (Peptoclostridium difficile) protein is Fructose-1,6-bisphosphatase class 3.